The primary structure comprises 120 residues: Small ribosomal subunit protein bS16 (120 aa).

A disordered region spans residues 80 to 120; sequence GLKKRPARNNPHKGEPGKKAQERIAAAKQAAEDAKAAEASA. Positions 81-90 are enriched in basic residues; the sequence is LKKRPARNNP. 2 stretches are compositionally biased toward basic and acidic residues: residues 91–101 and 109–120; these read HKGEPGKKAQE and AAEDAKAAEASA.

This sequence belongs to the bacterial ribosomal protein bS16 family.

This is Small ribosomal subunit protein bS16 from Bartonella bacilliformis (strain ATCC 35685 / KC583 / Herrer 020/F12,63).